The following is a 252-amino-acid chain: Large ribosomal subunit protein uL4 (252 aa).

This sequence belongs to the universal ribosomal protein uL4 family. Part of the 50S ribosomal subunit.

In terms of biological role, one of the primary rRNA binding proteins, this protein initially binds near the 5'-end of the 23S rRNA. It is important during the early stages of 50S assembly. It makes multiple contacts with different domains of the 23S rRNA in the assembled 50S subunit and ribosome. Forms part of the polypeptide exit tunnel. The polypeptide is Large ribosomal subunit protein uL4 (Archaeoglobus fulgidus (strain ATCC 49558 / DSM 4304 / JCM 9628 / NBRC 100126 / VC-16)).